The following is a 360-amino-acid chain: DNA replication and repair protein RecF (360 aa).

Residue 30 to 37 (GENGAGKT) coordinates ATP.

It belongs to the RecF family.

It localises to the cytoplasm. Functionally, the RecF protein is involved in DNA metabolism; it is required for DNA replication and normal SOS inducibility. RecF binds preferentially to single-stranded, linear DNA. It also seems to bind ATP. The sequence is that of DNA replication and repair protein RecF from Deinococcus deserti (strain DSM 17065 / CIP 109153 / LMG 22923 / VCD115).